Consider the following 700-residue polypeptide: Elongation factor G 1 (700 aa).

In terms of domain architecture, tr-type G spans Glu-8–Ile-290. GTP-binding positions include Ala-17 to Thr-24, Asp-88 to His-92, and Asn-142 to Asp-145.

Belongs to the TRAFAC class translation factor GTPase superfamily. Classic translation factor GTPase family. EF-G/EF-2 subfamily.

Its subcellular location is the cytoplasm. Catalyzes the GTP-dependent ribosomal translocation step during translation elongation. During this step, the ribosome changes from the pre-translocational (PRE) to the post-translocational (POST) state as the newly formed A-site-bound peptidyl-tRNA and P-site-bound deacylated tRNA move to the P and E sites, respectively. Catalyzes the coordinated movement of the two tRNA molecules, the mRNA and conformational changes in the ribosome. This Bordetella avium (strain 197N) protein is Elongation factor G 1.